The primary structure comprises 206 residues: MVLYFKLIDPEYICYMGIDKFENEDLIKYGWPEDVWFHVNDLSSAHVYLRLRKGETWNDIPANILEECCQLVKQNSIQGCKEASVDIVYTPWANLKKTAGMEAGQVLYHNEREVKYVRNVRKDSKIINRIEKTREKREVDLMHERDSRDKSERHEKRKEQEEKRRAEKKAYEEKQKMEDIKKYTSIMKTDNMKFNKYNPTDEDDFM.

Residues 1-34 are Extracellular-facing; that stretch reads MVLYFKLIDPEYICYMGIDKFENEDLIKYGWPED. Residues 35–51 traverse the membrane as a helical segment; that stretch reads VWFHVNDLSSAHVYLRL. Topologically, residues 52–206 are cytoplasmic; it reads RKGETWNDIP…YNPTDEDDFM (155 aa). Positions 138–181 are disordered; it reads EVDLMHERDSRDKSERHEKRKEQEEKRRAEKKAYEEKQKMEDIK. A coiled-coil region spans residues 144–182; the sequence is ERDSRDKSERHEKRKEQEEKRRAEKKAYEEKQKMEDIKK.

The protein belongs to the CCDC25 family.

Its subcellular location is the membrane. This chain is Coiled-coil domain-containing protein 25 homolog (ccdc25), found in Dictyostelium discoideum (Social amoeba).